Here is a 99-residue protein sequence, read N- to C-terminus: uncharacterized protein (99 aa).

Positions 50-77 (SAHWEDARSSGGTSPIRARAGSEGRGCQ) are disordered.

This is an uncharacterized protein from Homo sapiens (Human).